Consider the following 84-residue polypeptide: U21-theraphotoxin-Cg1b (84 aa).

A signal peptide spans 1-21; sequence MKVSVLITLAVLGVMFLLTSA. The propeptide occupies 22–47; the sequence is EERGSDQMDSPAWLKSMERIFQSEER. Intrachain disulfides connect C49–C63, C56–C68, and C62–C76. A Phenylalanine amide modification is found at F82.

Belongs to the neurotoxin 10 (Hwtx-1) family. 05 (F4a) subfamily. As to expression, expressed by the venom gland.

It is found in the secreted. In terms of biological role, probable ion channel inhibitor. This chain is U21-theraphotoxin-Cg1b, found in Chilobrachys guangxiensis (Chinese earth tiger tarantula).